We begin with the raw amino-acid sequence, 441 residues long: GTPase Der (441 aa).

EngA-type G domains are found at residues 4–169 (PVVA…PEDI) and 178–353 (IKVA…DQAA). GTP-binding positions include 10-17 (GRPNVGKS), 57-61 (DTGGI), 120-123 (NKVD), 184-191 (GKPNAGKS), 231-235 (DTAGI), and 296-299 (NKWD). Residues 354–438 (FRISTGMLND…PIRFIHRQRE (85 aa)) form the KH-like domain.

It belongs to the TRAFAC class TrmE-Era-EngA-EngB-Septin-like GTPase superfamily. EngA (Der) GTPase family. As to quaternary structure, associates with the 50S ribosomal subunit.

Its function is as follows. GTPase that plays an essential role in the late steps of ribosome biogenesis. This chain is GTPase Der, found in Ruminiclostridium cellulolyticum (strain ATCC 35319 / DSM 5812 / JCM 6584 / H10) (Clostridium cellulolyticum).